We begin with the raw amino-acid sequence, 147 residues long: Ribonuclease VapC43 (147 aa).

The region spanning 3 to 139 is the PINc domain; the sequence is CVDVNVLVYA…ARFRRLRWRH (137 aa). Residues D5 and D108 each contribute to the Mg(2+) site.

Belongs to the PINc/VapC protein family. The cofactor is Mg(2+).

Functionally, toxic component of a type II toxin-antitoxin (TA) system. An RNase. Its toxic effect is neutralized by coexpression with cognate antitoxin VapB43. The sequence is that of Ribonuclease VapC43 from Mycobacterium tuberculosis (strain CDC 1551 / Oshkosh).